We begin with the raw amino-acid sequence, 1357 residues long: DNA-directed RNA polymerase subunit beta (1357 aa).

It belongs to the RNA polymerase beta chain family. In terms of assembly, the RNAP catalytic core consists of 2 alpha, 1 beta, 1 beta' and 1 omega subunit. When a sigma factor is associated with the core the holoenzyme is formed, which can initiate transcription.

It carries out the reaction RNA(n) + a ribonucleoside 5'-triphosphate = RNA(n+1) + diphosphate. Functionally, DNA-dependent RNA polymerase catalyzes the transcription of DNA into RNA using the four ribonucleoside triphosphates as substrates. The sequence is that of DNA-directed RNA polymerase subunit beta from Pseudomonas putida (strain W619).